Reading from the N-terminus, the 373-residue chain is Putative F-box/kelch-repeat protein At2g41360 (373 aa).

In terms of domain architecture, F-box spans 8–54 (WSSLSCLPDEMVLNCLARVPRRYYENISCVSVRLRSLVRTPELYRMR). 2 Kelch repeats span residues 116-162 (EIYF…VFDG) and 163-208 (KIHV…MVSS).

The sequence is that of Putative F-box/kelch-repeat protein At2g41360 from Arabidopsis thaliana (Mouse-ear cress).